The primary structure comprises 595 residues: MGDKPTLVTLLTVAVSSPPPSSPLPLVSFTELLLPPPSVAAAAVAATATSEVGEKTAEQEVAAADPETGNERRENRENEGGETRTTGTTAVKRSHDGIPRQLAERLRLCRHMDPEQDYRLPAQDVVTSWIEALRDADRDNYGRCVRHAKIHRSASHLTAYESYLVSITEQYNTASNVTEKASYVQGCIFLSFPVIYNNTQGCGYKYDWSNVVTPKAAYAELFFLLCSTSESSVVLQPLITKGGLCSSMAVYDEETMRQSQAVQIGFLHTQLVMVPFVPHACPHYAVPFTTPGKPGCGGAPSGVAGLEEAAPFGRVSVTRHGATLLCRVDHLTWISKRVTTYGHKKITRYLAQFRGTMDDDEAALPGEDEAWIASKNVQYEFMGLIFTVNVDSLCVDAEQRQLLGTVATSFCHRVSDKITARNMPRAFSFYLLTSAQRGYDLRFSRNPSLFFSGDALNCPLLNEPNVFSLTVHAPYDIHFGVQPRQTVELDLRYVQITDRCFLVANLPHEDAFYTGLSVWRGGEPLKVTLWTRTRSIVIPQGTPIATLYQITEGDGNVYSYNHHTVFRQMHAAGTTTFFLGDMQLPADNFLTSPHP.

Residues 1–23 (MGDKPTLVTLLTVAVSSPPPSSP) form the signal peptide. The tract at residues 47-94 (TATSEVGEKTAEQEVAAADPETGNERRENRENEGGETRTTGTTAVKRS) is disordered. Residues 69–82 (GNERRENRENEGGE) are compositionally biased toward basic and acidic residues. Residues N176 and N197 are each glycosylated (N-linked (GlcNAc...) asparagine; by host).

The protein belongs to the herpesviridae U10 family. In terms of assembly, interacts with host CGAS.

Its subcellular location is the host cytoplasm. It localises to the host nucleus. In terms of biological role, plays a role in the inhibition of host innate immune system by targeting host CGAS and promoting dissociation of DNA from CGAS, thereby inhibiting the enzymatic activity of CGAS. This Homo sapiens (Human) protein is Protein UL31.